We begin with the raw amino-acid sequence, 465 residues long: Gamma-aminobutyric acid receptor subunit rho-2 (465 aa).

The first 20 residues, 1 to 20 (MPYFTRLILFLFCLMVLVES), serve as a signal peptide directing secretion. Residues 21–260 (RKPKRKRWTG…LYINFTLRRH (240 aa)) lie on the Extracellular side of the membrane. Arginine 105 contacts 4-aminobutanoate. Asparagine 120 carries N-linked (GlcNAc...) asparagine glycosylation. Serine 169 contributes to the 4-aminobutanoate binding site. The cysteines at positions 178 and 192 are disulfide-linked. Residue glutamate 197 coordinates 4-aminobutanoate. N-linked (GlcNAc...) asparagine glycosylation occurs at asparagine 254. Residues 261-281 (IFFFLLQTYFPATLMVMLSWV) traverse the membrane as a helical segment. The Cytoplasmic segment spans residues 282–293 (SFWIDRRAVPAR). Residues 294-314 (VSLGITTVLTMTTIITGVNAS) traverse the membrane as a helical segment. Topologically, residues 315-325 (MPRVSYVKAVD) are extracellular. Residues 326–346 (IYLWVSFVFVFLSVLEYAAVN) traverse the membrane as a helical segment. Over 347–443 (YLTTVQERKE…IFQNTHAIDK (97 aa)) the chain is Cytoplasmic. Residues 444–464 (YSRLIFPASYIFFNLIYWSVF) form a helical membrane-spanning segment. Position 465 (serine 465) is a topological domain, extracellular.

The protein belongs to the ligand-gated ion channel (TC 1.A.9) family. Gamma-aminobutyric acid receptor (TC 1.A.9.5) subfamily. GABRR2 sub-subfamily. Three rho subunits (rho-1/GBRR1, rho-2/GBRR2 and rho-3/GBRR3) coassemble either to form functional homopentamers or heteropentamers. Rho-2 is unable to form a functional homopentamer. Interacts with SQSTM1.

The protein resides in the postsynaptic cell membrane. Its subcellular location is the cell membrane. The enzyme catalyses chloride(in) = chloride(out). Its function is as follows. Rho subunit of the pentameric ligand-gated chloride channels responsible for mediating the effects of gamma-aminobutyric acid (GABA), the major inhibitory neurotransmitter in the brain. Rho-containing GABA-gated chloride channels are a subclass of GABA(A) receptors (GABAARs) entirely composed of rho subunits, where GABA molecules bind at the rho intersubunit interfaces. When activated by GABA, rho-GABAARs selectively allow the flow of chloride anions across the cell membrane down their electrochemical gradient. Rho-2 GABAARs may contribute to the regulation of glial development in the cerebellum by controlling extrasynaptic transmission. Rho-2 GABAARs are also involved in neuronal tonic (extrasynaptic) and phasic (synaptic) transmission in the Purkinje neurons of the cerebellum. Rho-2 GABAARs expressed in retina may play a role in retinal neurotransmission. This Homo sapiens (Human) protein is Gamma-aminobutyric acid receptor subunit rho-2.